Reading from the N-terminus, the 399-residue chain is Subtilisin-like protease 4 (399 aa).

The first 19 residues, 1–19 (MVCLKTLSVFLAAFAVADA), serve as a signal peptide directing secretion. The propeptide occupies 20-118 (RAVFKTQSNK…VEQDQVVRIS (99 aa)). One can recognise an Inhibitor I9 domain in the interval 38 to 117 (YIVVMKDGVS…YVEQDQVVRI (80 aa)). The region spanning 128 to 399 (SWGLGRVSHR…NRLLYNGSGQ (272 aa)) is the Peptidase S8 domain. Residues Asp-160 and His-191 each act as charge relay system in the active site. An N-linked (GlcNAc...) asparagine glycan is attached at Asn-252. The Charge relay system role is filled by Ser-346. The segment covering 380-392 (AISNPGSGTTNRL) has biased composition (polar residues). The disordered stretch occupies residues 380–399 (AISNPGSGTTNRLLYNGSGQ). N-linked (GlcNAc...) asparagine glycosylation occurs at Asn-395.

This sequence belongs to the peptidase S8 family.

It is found in the secreted. Its function is as follows. Secreted subtilisin-like serine protease with keratinolytic activity that contributes to pathogenicity. In Arthroderma gypseum (strain ATCC MYA-4604 / CBS 118893) (Microsporum gypseum), this protein is Subtilisin-like protease 4 (SUB4).